The chain runs to 256 residues: Floral homeotic protein APETALA 1 (256 aa).

The MADS-box domain maps to 1–61; that stretch reads MGRGRVQLKR…GKLFEYSTDP (61 aa). Residues 88–178 enclose the K-box domain; the sequence is NTNWSMEYNR…SKQIKERENV (91 aa). The tract at residues 187–206 is disordered; the sequence is DEQNHGHNMPPPPPPQQHQI.

In terms of assembly, homodimer capable of binding to CArG-box sequences.

Its subcellular location is the nucleus. Transcription factor that promotes early floral meristem identity in synergy with LEAFY. Displays a redundant function with CAULIFLOWER in the up-regulation of LEAFY. Required subsequently for the transition of an inflorescence meristem into a floral meristem, and for the normal development of sepals and petals in flowers. Regulates positively B class homeotic proteins. The polypeptide is Floral homeotic protein APETALA 1 (AP1) (Brassica oleracea (Wild cabbage)).